The following is a 454-amino-acid chain: MSGYERKNTTANSITITKRKRNSISEQSENVYEKSNRKESITLKPHRSFTPGFSQRDCKPVRHSKSSLRRRRRTKEKISSSVEREWVFSANNFENLADKLVLVSYNLLGVDNASNHMDLYYNVPRKHLEWSRRKHLICKEISRYNASILCLQEVDRFDDLDVLLKNRGFRGVHKSRTGEASDGCAIFWKENLFELLDHQHIEFDKFGMRNNVAQLCVLEMNCEEDPKSKLRVRSSDPRRLVVGNIHVLFNPKRGDIKLGQVRLFLEKAYKLSQEWGNIPVAIAGDLNSTPQSAIYDFIASADLDTQLHDRRQISGQTEVEPKERSFRNHYAFSASASISGSLLNEWSQEELQLATGGQETTHVQHQLKLNSAYSGVPGTYRTRDQRGEPLATTYHSRFLGTVDYIWHTKELVPVRVLETLPADVLRRTGGLPSENWGSDHLAIACELGFVNDWQ.

Positions 1–76 (MSGYERKNTT…SLRRRRRTKE (76 aa)) are disordered. Residues 31–41 (VYEKSNRKESI) are compositionally biased toward basic and acidic residues. Residues 61-75 (VRHSKSSLRRRRRTK) are compositionally biased toward basic residues. Glu-153 lines the Mg(2+) pocket.

This sequence belongs to the CCR4/nocturin family. In terms of assembly, component of the CCR4-NOT complex, at least composed of CRR4 and CAF1 proteins. Mg(2+) is required as a cofactor.

It is found in the nucleus. The protein resides in the cytoplasm. The enzyme catalyses Exonucleolytic cleavage of poly(A) to 5'-AMP.. Acts as a catalytic component of the CCR4-NOT core complex, which in the nucleus seems to be a general transcription factor, and in the cytoplasm the major mRNA deadenylase involved in mRNA turnover. In Arabidopsis thaliana (Mouse-ear cress), this protein is Carbon catabolite repressor protein 4 homolog 5 (CCR4-5).